Reading from the N-terminus, the 237-residue chain is N-alpha-acetyltransferase 40 (237 aa).

A lipid anchor (N-myristoyl glycine) is attached at glycine 2. An N-acetyltransferase domain is found at 63–216 (SGLEPATVDW…EDCSYEILSR (154 aa)). Residues tyrosine 85, 127–129 (DVE), and tyrosine 138 each bind substrate. Residues 140–142 (VQL) and 148–153 (RKGLGK) contribute to the acetyl-CoA site. Threonine 174 lines the substrate pocket. Asparagine 179 serves as a coordination point for acetyl-CoA. Residues serine 197 and tyrosine 211 each contribute to the substrate site.

The protein belongs to the acetyltransferase family. NAA40 subfamily. Widely expressed; with the highest expression level in liver and the lowest expression in brain (at protein level).

It localises to the cytoplasm. The protein resides in the nucleus. It catalyses the reaction N-terminal L-seryl-[histone H4] + acetyl-CoA = N-terminal N(alpha)-acetyl-L-seryl-[histone H4] + CoA + H(+). The enzyme catalyses N-terminal L-seryl-[histone H2A] + acetyl-CoA = N-terminal N(alpha)-acetyl-L-seryl-[histone H2A] + CoA + H(+). In terms of biological role, N-alpha-acetyltransferase that specifically mediates the acetylation of the N-terminal residues of histones H4 and H2A. In contrast to other N-alpha-acetyltransferase, has a very specific selectivity for histones H4 and H2A N-terminus and specifically recognizes the 'Ser-Gly-Arg-Gly sequence'. Acts as a negative regulator of apoptosis. May play a role in hepatic lipid metabolism. The chain is N-alpha-acetyltransferase 40 from Homo sapiens (Human).